A 141-amino-acid polypeptide reads, in one-letter code: Large ribosomal subunit protein uL11 (141 aa).

It belongs to the universal ribosomal protein uL11 family. Part of the ribosomal stalk of the 50S ribosomal subunit. Interacts with L10 and the large rRNA to form the base of the stalk. L10 forms an elongated spine to which L12 dimers bind in a sequential fashion forming a multimeric L10(L12)X complex. Post-translationally, one or more lysine residues are methylated.

Forms part of the ribosomal stalk which helps the ribosome interact with GTP-bound translation factors. The polypeptide is Large ribosomal subunit protein uL11 (Nautilia profundicola (strain ATCC BAA-1463 / DSM 18972 / AmH)).